We begin with the raw amino-acid sequence, 321 residues long: MLIVGAGPAGLYGAYYAGFRGMSVALMDSLPEAGGQVTAMYPEKVIYDVAGFPAIRGRELVDALVTQAAQFDPTYLLDQQAAELAHEPDAVVVTSSQGHRVRARVVVITGGLGTFTPRPLPTGTGHLGRGLVYFVPKLDVYADQDVIVVGGGDSAFDWALALEPIARSVTLVHRRDRFRAHAATIERVEASRVEILTFSEVAAIHGEDRIEKVELVQTRTGDRHVRPAQAVVAALGFTADLGPLTRWGLTMARRHIAVDSTMFTGVDRVFAAGDITEYPGKVRLIATGFGEVATAVNNAAPVVDPAAKVFPGHSSGDSTAS.

Residues D28, Q36, Y41, A81, F115, D274, and S315 each coordinate FAD.

This sequence belongs to the ferredoxin--NADP reductase type 2 family. As to quaternary structure, homodimer. FAD serves as cofactor.

It carries out the reaction 2 reduced [2Fe-2S]-[ferredoxin] + NADP(+) + H(+) = 2 oxidized [2Fe-2S]-[ferredoxin] + NADPH. The polypeptide is Ferredoxin--NADP reductase (Frankia alni (strain DSM 45986 / CECT 9034 / ACN14a)).